Consider the following 427-residue polypeptide: Adenylosuccinate synthetase (427 aa).

GTP is bound by residues 12–18 (GDEGKGK) and 40–42 (GHT). Catalysis depends on Asp13, which acts as the Proton acceptor. 2 residues coordinate Mg(2+): Asp13 and Gly40. Residues 13–16 (DEGK), 38–41 (NAGH), Thr128, Arg142, Gln223, Thr238, and Arg302 contribute to the IMP site. The active-site Proton donor is the His41. 298-304 (TTTGRPR) contacts substrate. GTP is bound by residues Arg304, 330 to 332 (SID), and 412 to 414 (SVG).

It belongs to the adenylosuccinate synthetase family. Homodimer. It depends on Mg(2+) as a cofactor.

It is found in the cytoplasm. It carries out the reaction IMP + L-aspartate + GTP = N(6)-(1,2-dicarboxyethyl)-AMP + GDP + phosphate + 2 H(+). It participates in purine metabolism; AMP biosynthesis via de novo pathway; AMP from IMP: step 1/2. In terms of biological role, plays an important role in the de novo pathway of purine nucleotide biosynthesis. Catalyzes the first committed step in the biosynthesis of AMP from IMP. The sequence is that of Adenylosuccinate synthetase from Staphylococcus aureus (strain N315).